Consider the following 337-residue polypeptide: Phosphatidylglycerophosphate phosphatase PTPMT1 (337 aa).

The tract at residues 1 to 20 (MYIKELTETDEEKRERSVED) is disordered. Positions 55 and 133 each coordinate substrate. In terms of domain architecture, Tyrosine-protein phosphatase spans 73–220 (WWDRVAEFIL…VVEYYHVKVL (148 aa)). C164 acts as the Phosphocysteine intermediate in catalysis. The Glucan phosphatase signature motif CXAGXGR motif lies at 164 to 170 (CKAGRGR). A substrate-binding site is contributed by 165 to 170 (KAGRGR).

The protein belongs to the protein-tyrosine phosphatase family. Non-receptor class dual specificity subfamily. As to expression, expressed in stems, roots, flowers, mature seeds and leaves.

It carries out the reaction O-phospho-L-seryl-[protein] + H2O = L-seryl-[protein] + phosphate. The catalysed reaction is O-phospho-L-threonyl-[protein] + H2O = L-threonyl-[protein] + phosphate. The enzyme catalyses O-phospho-L-tyrosyl-[protein] + H2O = L-tyrosyl-[protein] + phosphate. It catalyses the reaction a 1,2-diacyl-sn-glycero-3-phospho-(1'-sn-glycero-3'-phosphate) + H2O = a 1,2-diacyl-sn-glycero-3-phospho-(1'-sn-glycerol) + phosphate. It functions in the pathway phospholipid metabolism; phosphatidylglycerol biosynthesis; phosphatidylglycerol from CDP-diacylglycerol: step 2/2. Its function is as follows. Exhibits phosphatidylglycerophosphate phosphatase activity. Involved in root growth and columella cells organization. May possess protein phosphatase activity. The chain is Phosphatidylglycerophosphate phosphatase PTPMT1 from Arabidopsis thaliana (Mouse-ear cress).